The following is a 249-amino-acid chain: Aspartate/glutamate leucyltransferase (249 aa).

This sequence belongs to the R-transferase family. Bpt subfamily.

The protein resides in the cytoplasm. The enzyme catalyses N-terminal L-glutamyl-[protein] + L-leucyl-tRNA(Leu) = N-terminal L-leucyl-L-glutamyl-[protein] + tRNA(Leu) + H(+). The catalysed reaction is N-terminal L-aspartyl-[protein] + L-leucyl-tRNA(Leu) = N-terminal L-leucyl-L-aspartyl-[protein] + tRNA(Leu) + H(+). Its function is as follows. Functions in the N-end rule pathway of protein degradation where it conjugates Leu from its aminoacyl-tRNA to the N-termini of proteins containing an N-terminal aspartate or glutamate. The protein is Aspartate/glutamate leucyltransferase of Brucella canis (strain ATCC 23365 / NCTC 10854 / RM-666).